Here is a 316-residue protein sequence, read N- to C-terminus: Transaldolase (316 aa).

Lys125 functions as the Schiff-base intermediate with substrate in the catalytic mechanism.

Belongs to the transaldolase family. Type 1 subfamily. Homodimer.

It localises to the cytoplasm. The catalysed reaction is D-sedoheptulose 7-phosphate + D-glyceraldehyde 3-phosphate = D-erythrose 4-phosphate + beta-D-fructose 6-phosphate. It participates in carbohydrate degradation; pentose phosphate pathway; D-glyceraldehyde 3-phosphate and beta-D-fructose 6-phosphate from D-ribose 5-phosphate and D-xylulose 5-phosphate (non-oxidative stage): step 2/3. Transaldolase is important for the balance of metabolites in the pentose-phosphate pathway. This is Transaldolase from Acidovorax ebreus (strain TPSY) (Diaphorobacter sp. (strain TPSY)).